The following is a 572-amino-acid chain: Periplasmic pectate lyase (572 aa).

An N-terminal signal peptide occupies residues 1-23 (MKKRALLLSMSVLAMLYIPAGQA).

This sequence belongs to the polysaccharide lyase 2 family.

The protein resides in the periplasm. The catalysed reaction is Eliminative cleavage of (1-&gt;4)-alpha-D-galacturonan to give oligosaccharides with 4-deoxy-alpha-D-galact-4-enuronosyl groups at their non-reducing ends.. The protein operates within glycan metabolism; pectin degradation; 2-dehydro-3-deoxy-D-gluconate from pectin: step 2/5. The chain is Periplasmic pectate lyase (pelY) from Yersinia pseudotuberculosis serotype I (strain IP32953).